A 161-amino-acid chain; its full sequence is Troponin C, slow skeletal and cardiac muscles (161 aa).

At M1 the chain carries N-acetylmethionine. 4 EF-hand domains span residues 16–51, 52–87, 92–127, and 128–161; these read QKNE…LGQN, PTPE…CMKD, KTEE…TGET, and ITED…KGVE. Ca(2+) contacts are provided by D65, D67, S69, T71, E76, D105, N107, D109, Y111, E116, D141, N143, D145, R147, and E152.

The protein belongs to the troponin C family.

In terms of biological role, troponin is the central regulatory protein of striated muscle contraction. Tn consists of three components: Tn-I which is the inhibitor of actomyosin ATPase, Tn-T which contains the binding site for tropomyosin and Tn-C. The binding of calcium to Tn-C abolishes the inhibitory action of Tn on actin filaments. The sequence is that of Troponin C, slow skeletal and cardiac muscles (TNNC1) from Gallus gallus (Chicken).